A 684-amino-acid chain; its full sequence is Kinesin-like protein KIN-13B (684 aa).

Disordered regions lie at residues 1–31 (MSGR…SNGR) and 71–103 (GNEF…SPGL). Composition is skewed to polar residues over residues 18–31 (LSDN…SNGR) and 79–91 (TTPQ…TNQR). The region spanning 169-492 (KIKVVVRKRP…LRYADRVKSL (324 aa)) is the Kinesin motor domain. Position 258–265 (258–265 (GQTGSGKT)) interacts with ATP. The disordered stretch occupies residues 574 to 594 (KPTIQMKSRDMPRPDMKKSNS). Basic and acidic residues predominate over residues 580 to 594 (KSRDMPRPDMKKSNS). The stretch at 596-626 (DNLNALLQEEEDLVNAHRKQVEDTMNIVKEE) forms a coiled coil.

Belongs to the TRAFAC class myosin-kinesin ATPase superfamily. Kinesin family. KIN-13 subfamily.

Functionally, acts redundantly with KIN13A to modulate cell wall synthesis and cell expansion via the THE1 pathway. The sequence is that of Kinesin-like protein KIN-13B from Arabidopsis thaliana (Mouse-ear cress).